The following is a 582-amino-acid chain: Phosphoribosylaminoimidazole carboxylase (582 aa).

Positions 114 to 305 constitute an ATP-grasp domain; the sequence is KKYLAEKGVA…QFENHLRAIL (192 aa). 143-200 lines the ATP pocket; the sequence is AGRLGLPLMLKAKTLAYDGRGNSPLKSTSSEDIQASLKFLGDRPLYAEGWAPFVKEVA.

It in the C-terminal section; belongs to the AIR carboxylase family. Class I subfamily.

It catalyses the reaction 5-amino-1-(5-phospho-D-ribosyl)imidazole-4-carboxylate + H(+) = 5-amino-1-(5-phospho-beta-D-ribosyl)imidazole + CO2. Its pathway is purine metabolism; IMP biosynthesis via de novo pathway; 5-amino-1-(5-phospho-D-ribosyl)imidazole-4-carboxylate from 5-amino-1-(5-phospho-D-ribosyl)imidazole (carboxylase route): step 1/1. This Cryptococcus neoformans var. grubii serotype A (strain H99 / ATCC 208821 / CBS 10515 / FGSC 9487) (Filobasidiella neoformans var. grubii) protein is Phosphoribosylaminoimidazole carboxylase (ADE2).